Here is a 601-residue protein sequence, read N- to C-terminus: MKLQAVMETLIQRQQRARQELEARQAPPPPPPEPTGVRARTTMTDEDREPENARMHRTQMAALAAMRAAAAGLGHPSSPGGSEDGPPISGDEDTAREGTLSSPALHGSVLEGAGHAEGDRHLMDVGSDDDDTKSKWEEQELEELGEEEEEEEEEDDFEEEEEEEEGLGPPESASLGTAGLFTRKAPPAQAFRGDGGPRMLSGPERLGPGPAHPSHMASQMPPPDHGDWTFEEQFKQLYELDADPKRKEFLDDLFSFMQKRGTPVNRIPIMAKQVLDLFMLYVLVTEKGGLVEVINKKLWREITKGLNLPTSITSAAFTLRTQYMKYLYPYECERRGLSSPNELQAAIDSNRREGRRQSFGGSLFAYSPSGAHSMLPSPKLPVTPLGLAASTNGSSITPAPKIKKEEDSAIPITVPGRLPVSLAGHPVVAAQAAAVQAAAAQAAVAAQAAALEQLREKLESTEPPEKKMALVADEQQRLMQRAVQQSFLAMTAQLPMNIRINSQASESRQDSAVSLTSANGSNSISMSVEMNGIVYTGVLFAQPPPPTAPSAPGKGGVSSIGTNTTTGSRTGASGSTVSGGQVGLPGVSTPTMSSTSNNSLP.

A disordered region spans residues 1–224 (MKLQAVMETL…HMASQMPPPD (224 aa)). Residues 60–89 (MAALAAMRAAAAGLGHPSSPGGSEDGPPIS) show a composition bias toward low complexity. A phosphoserine mark is found at S78, S82, and S89. T99 carries the phosphothreonine modification. S102 bears the Phosphoserine mark. Over residues 114-123 (GHAEGDRHLM) the composition is skewed to basic and acidic residues. S127 carries the post-translational modification Phosphoserine. Positions 128–165 (DDDDTKSKWEEQELEELGEEEEEEEEEDDFEEEEEEEE) are acidic. Residues 139–166 (QELEELGEEEEEEEEEDDFEEEEEEEEG) show a composition bias toward acidic residues. The ARID domain occupies 243-335 (DPKRKEFLDD…YLYPYECERR (93 aa)). Phosphoserine is present on residues S358 and S367. Glycyl lysine isopeptide (Lys-Gly) (interchain with G-Cter in SUMO2) cross-links involve residues K403, K404, K457, and K467. The REKLES domain maps to 449 to 546 (AALEQLREKL…GVLFAQPPPP (98 aa)). The segment at 450 to 493 (ALEQLREKLESTEPPEKKMALVADEQQRLMQRAVQQSFLAMTAQ) is important for nuclear localization. The tract at residues 495–518 (PMNIRINSQASESRQDSAVSLTSA) is homodimerization. The interval 542 to 562 (QPPPPTAPSAPGKGGVSSIGT) is important for cytoplasmic localization. The segment at 545 to 601 (PPTAPSAPGKGGVSSIGTNTTTGSRTGASGSTVSGGQVGLPGVSTPTMSSTSNNSLP) is disordered. Composition is skewed to low complexity over residues 559 to 579 (SIGT…TVSG) and 588 to 601 (STPT…NSLP).

As to quaternary structure, homodimer. Heterodimer with ARID3B. Interacts with E2F1. Interacts with GTF2I and BTK. B-cell specific in the adult. Expressed in B-cell progenitors, down-regulated in the immature B-cell stage, and is up-regulated again at later stages of B-lymphocyte differentiation.

The protein resides in the nucleus. The protein localises to the cytoplasm. Functionally, transcription factor involved in B-cell differentiation. Binds a VH promoter proximal site necessary for induced mu-heavy-chain transcription. Binds the minor groove of a restricted ATC sequence that is sufficient for nuclear matrix association. This sequence motif is present in matrix-associating regions (MARS) proximal to the promoter and flanking E mu. Activates E mu-driven transcription by binding these sites. May be involved in the control of cell cycle progression by the RB1/E2F1 pathway. This Mus musculus (Mouse) protein is AT-rich interactive domain-containing protein 3A (Arid3a).